We begin with the raw amino-acid sequence, 293 residues long: Cytidine deaminase (293 aa).

2 CMP/dCMP-type deaminase domains span residues 47-166 and 186-293; these read DDRA…FGPA and VSDD…YQAV. Residue 88-90 participates in substrate binding; sequence NME. A Zn(2+)-binding site is contributed by His-101. Residue Glu-103 is the Proton donor of the active site. Residues Cys-128 and Cys-131 each coordinate Zn(2+).

Belongs to the cytidine and deoxycytidylate deaminase family. In terms of assembly, homodimer. The cofactor is Zn(2+).

The catalysed reaction is cytidine + H2O + H(+) = uridine + NH4(+). It carries out the reaction 2'-deoxycytidine + H2O + H(+) = 2'-deoxyuridine + NH4(+). This enzyme scavenges exogenous and endogenous cytidine and 2'-deoxycytidine for UMP synthesis. This chain is Cytidine deaminase, found in Aeromonas hydrophila subsp. hydrophila (strain ATCC 7966 / DSM 30187 / BCRC 13018 / CCUG 14551 / JCM 1027 / KCTC 2358 / NCIMB 9240 / NCTC 8049).